Consider the following 1464-residue polypeptide: Secretory phospholipase A2 receptor (1464 aa).

A signal peptide spans 1–22 (MLLSPSLLLPLLLLLGAPRGCA). Over 23-1398 (EGVAAALTPE…ELPEKGPSHS (1376 aa)) the chain is Extracellular. A Ricin B-type lectin domain is found at 40–163 (KGIFVIQSES…GSGGGDICEY (124 aa)). 17 disulfide bridges follow: Cys-53/Cys-66, Cys-91/Cys-108, Cys-180/Cys-206, Cys-194/Cys-221, Cys-262/Cys-356, Cys-332/Cys-348, Cys-408/Cys-503, Cys-480/Cys-495, Cys-619/Cys-636, Cys-701/Cys-798, Cys-776/Cys-790, Cys-842/Cys-939, Cys-916/Cys-931, Cys-1069/Cys-1089, Cys-1211/Cys-1225, Cys-1282/Cys-1378, and Cys-1356/Cys-1370. N-linked (GlcNAc...) asparagine glycosylation is present at Asn-95. The Fibronectin type-II domain maps to 175–223 (AHGMPCMFPFQYNHQWHHECTREGREDDLLWCATTSRYERDEKWGFCPD). C-type lectin domains follow at residues 240–357 (NSHI…YVCK), 387–504 (YNRN…YVCK), 524–645 (HGGF…MSLC), 675–799 (GLAS…WICK), 821–940 (YQDA…SICK), 967–1098 (FNYK…GFVC), 1123–1234 (YGNR…GAIC), and 1259–1379 (FKSN…FICK). Asn-456 carries an N-linked (GlcNAc...) asparagine glycan. A helical transmembrane segment spans residues 1399-1419 (IIPLAVVLTLIVIVAICTLSF). The Cytoplasmic portion of the chain corresponds to 1420–1464 (CIYKHNGGFFRRLAGFRNPYYPATNFSTVHLEENILISDLEKSDQ). Positions 1437–1443 (NPYYPAT) match the Endocytosis signal motif.

In terms of assembly, interacts with sPLA2-IB/PLA2G1B; this interaction mediates intracellular signaling as well as clearance of extracellular sPLA2-IB/PLA2G1B via endocytotic pathway. Interacts with sPLA2-X/PLA2G10; this interaction mediates sPLA2-X/PLA2G10 clearance and inactivation. Post-translationally, the secretory phospholipase A2 receptor form may be produced by the action of metalloproteinases. It contains all extracellular domains and only lacks transmembrane and cytosolic regions. It is however unclear whether this form is produced by proteolytic cleavage as suggested by some experiments, or by alternative splicing.

The protein resides in the cell membrane. The protein localises to the secreted. Functionally, receptor for secretory phospholipase A2 (sPLA2). Also able to bind to snake PA2-like toxins. Although its precise function remains unclear, binding of sPLA2 to its receptor participates in both positive and negative regulation of sPLA2 functions as well as clearance of sPLA2. Binding of sPLA2-IB/PLA2G1B induces various effects depending on the cell type, such as activation of the mitogen-activated protein kinase (MAPK) cascade to induce cell proliferation, the production of lipid mediators, selective release of arachidonic acid in bone marrow-derived mast cells. In neutrophils, binding of sPLA2-IB/PLA2G1B can activate p38 MAPK to stimulate elastase release and cell adhesion. May be involved in responses in pro-inflammatory cytokine productions during endotoxic shock. Also has endocytic properties and rapidly internalizes sPLA2 ligands, which is particularly important for the clearance of extracellular sPLA2s to protect their potent enzymatic activities. The soluble secretory phospholipase A2 receptor form is circulating and acts as a negative regulator of sPLA2 functions by blocking the biological functions of sPLA2-IB/PLA2G1B and sPLA2-X/PLA2G10. The chain is Secretory phospholipase A2 receptor (PLA2R1) from Pongo abelii (Sumatran orangutan).